We begin with the raw amino-acid sequence, 239 residues long: Ribosomal RNA small subunit methyltransferase G (239 aa).

S-adenosyl-L-methionine-binding positions include Gly105, Leu110, 156 to 157 (VE), and Arg169.

It belongs to the methyltransferase superfamily. RNA methyltransferase RsmG family.

It localises to the cytoplasm. It catalyses the reaction guanosine(527) in 16S rRNA + S-adenosyl-L-methionine = N(7)-methylguanosine(527) in 16S rRNA + S-adenosyl-L-homocysteine. Its function is as follows. Specifically methylates the N7 position of guanine in position 527 of 16S rRNA. The protein is Ribosomal RNA small subunit methyltransferase G of Verminephrobacter eiseniae (strain EF01-2).